Reading from the N-terminus, the 99-residue chain is Large ribosomal subunit protein uL23 (99 aa).

This sequence belongs to the universal ribosomal protein uL23 family. Part of the 50S ribosomal subunit. Contacts protein L29, and trigger factor when it is bound to the ribosome.

In terms of biological role, one of the early assembly proteins it binds 23S rRNA. One of the proteins that surrounds the polypeptide exit tunnel on the outside of the ribosome. Forms the main docking site for trigger factor binding to the ribosome. The polypeptide is Large ribosomal subunit protein uL23 (Leifsonia xyli subsp. xyli (strain CTCB07)).